The sequence spans 224 residues: LexA repressor (224 aa).

Positions 31-51 form a DNA-binding region, H-T-H motif; sequence RAEIATELGFRSANAAEEHLQ. Residues serine 142 and lysine 179 each act as for autocatalytic cleavage activity in the active site.

The protein belongs to the peptidase S24 family. As to quaternary structure, homodimer.

It carries out the reaction Hydrolysis of Ala-|-Gly bond in repressor LexA.. Functionally, represses a number of genes involved in the response to DNA damage (SOS response), including recA and lexA. In the presence of single-stranded DNA, RecA interacts with LexA causing an autocatalytic cleavage which disrupts the DNA-binding part of LexA, leading to derepression of the SOS regulon and eventually DNA repair. This Albidiferax ferrireducens (strain ATCC BAA-621 / DSM 15236 / T118) (Rhodoferax ferrireducens) protein is LexA repressor.